Reading from the N-terminus, the 763-residue chain is Phosphoglycerol transferase I (763 aa).

4 helical membrane-spanning segments follow: residues 1–21, 26–46, 77–97, and 108–128; these read MSEL…AWKA, WWFA…ITLF, ILPG…LGWI, and FGYS…SPAF.

It belongs to the OpgB family.

Its subcellular location is the cell inner membrane. The enzyme catalyses a phosphatidylglycerol + a membrane-derived-oligosaccharide D-glucose = a 1,2-diacyl-sn-glycerol + a membrane-derived-oligosaccharide 6-(glycerophospho)-D-glucose.. Its pathway is glycan metabolism; osmoregulated periplasmic glucan (OPG) biosynthesis. In terms of biological role, transfers a phosphoglycerol residue from phosphatidylglycerol to the membrane-bound nascent glucan backbones. The polypeptide is Phosphoglycerol transferase I (Escherichia coli O17:K52:H18 (strain UMN026 / ExPEC)).